The following is a 67-amino-acid chain: Large ribosomal subunit protein bL35 (67 aa).

This sequence belongs to the bacterial ribosomal protein bL35 family.

This is Large ribosomal subunit protein bL35 from Rhizobium etli (strain CIAT 652).